We begin with the raw amino-acid sequence, 227 residues long: Cytochrome c oxidase subunit 2 (227 aa).

Topologically, residues 1 to 14 (MAHATQVGLQDATS) are mitochondrial intermembrane. A helical membrane pass occupies residues 15 to 45 (PIMEELISFHDHALMIIFLISFLVLYALFLT). Residues 46–59 (LTTKLTNTNITDAQ) lie on the Mitochondrial matrix side of the membrane. A helical transmembrane segment spans residues 60–87 (EMETVWTILPAIILVLIALPSLRILYLT). Topologically, residues 88–227 (DEINDPSFTI…IFEMGPVFTL (140 aa)) are mitochondrial intermembrane. Cu cation contacts are provided by histidine 161, cysteine 196, glutamate 198, cysteine 200, histidine 204, and methionine 207. Glutamate 198 serves as a coordination point for Mg(2+).

This sequence belongs to the cytochrome c oxidase subunit 2 family. Component of the cytochrome c oxidase (complex IV, CIV), a multisubunit enzyme composed of 14 subunits. The complex is composed of a catalytic core of 3 subunits MT-CO1, MT-CO2 and MT-CO3, encoded in the mitochondrial DNA, and 11 supernumerary subunits COX4I, COX5A, COX5B, COX6A, COX6B, COX6C, COX7A, COX7B, COX7C, COX8 and NDUFA4, which are encoded in the nuclear genome. The complex exists as a monomer or a dimer and forms supercomplexes (SCs) in the inner mitochondrial membrane with NADH-ubiquinone oxidoreductase (complex I, CI) and ubiquinol-cytochrome c oxidoreductase (cytochrome b-c1 complex, complex III, CIII), resulting in different assemblies (supercomplex SCI(1)III(2)IV(1) and megacomplex MCI(2)III(2)IV(2)). Found in a complex with TMEM177, COA6, COX18, COX20, SCO1 and SCO2. Interacts with TMEM177 in a COX20-dependent manner. Interacts with COX20. Interacts with COX16. The cofactor is Cu cation.

The protein resides in the mitochondrion inner membrane. It catalyses the reaction 4 Fe(II)-[cytochrome c] + O2 + 8 H(+)(in) = 4 Fe(III)-[cytochrome c] + 2 H2O + 4 H(+)(out). Its function is as follows. Component of the cytochrome c oxidase, the last enzyme in the mitochondrial electron transport chain which drives oxidative phosphorylation. The respiratory chain contains 3 multisubunit complexes succinate dehydrogenase (complex II, CII), ubiquinol-cytochrome c oxidoreductase (cytochrome b-c1 complex, complex III, CIII) and cytochrome c oxidase (complex IV, CIV), that cooperate to transfer electrons derived from NADH and succinate to molecular oxygen, creating an electrochemical gradient over the inner membrane that drives transmembrane transport and the ATP synthase. Cytochrome c oxidase is the component of the respiratory chain that catalyzes the reduction of oxygen to water. Electrons originating from reduced cytochrome c in the intermembrane space (IMS) are transferred via the dinuclear copper A center (CU(A)) of subunit 2 and heme A of subunit 1 to the active site in subunit 1, a binuclear center (BNC) formed by heme A3 and copper B (CU(B)). The BNC reduces molecular oxygen to 2 water molecules using 4 electrons from cytochrome c in the IMS and 4 protons from the mitochondrial matrix. The protein is Cytochrome c oxidase subunit 2 (MT-CO2) of Hylobates lar (Lar gibbon).